A 318-amino-acid polypeptide reads, in one-letter code: Ubiquitin-like domain-containing CTD phosphatase 1 (318 aa).

A2 carries the post-translational modification N-acetylalanine. Residues 3-81 enclose the Ubiquitin-like domain; that stretch reads LPIIVKWGGQ…IMMMGTREES (79 aa). K117 carries the N6-acetyllysine modification. The region spanning 133–294 is the FCP1 homology domain; that stretch reads PREGKKLLVL…LKLTQYLKEI (162 aa). Positions 143, 145, and 253 each coordinate Mg(2+).

Requires Mg(2+) as cofactor.

The protein resides in the nucleus. It carries out the reaction O-phospho-L-seryl-[protein] + H2O = L-seryl-[protein] + phosphate. The enzyme catalyses O-phospho-L-threonyl-[protein] + H2O = L-threonyl-[protein] + phosphate. Dephosphorylates 26S nuclear proteasomes, thereby decreasing their proteolytic activity. Recruited to the 19S regulatory particle of the 26S proteasome through its interaction with 19S component PSMD2/RPN1. Once recruited, dephosphorylates 19S component PSMC2/RPT1 which impairs PSMC2 ATPase activity and disrupts 26S proteasome assembly. Has also been reported to stimulate the proteolytic activity of the 26S proteasome. In Pongo abelii (Sumatran orangutan), this protein is Ubiquitin-like domain-containing CTD phosphatase 1 (UBLCP1).